Reading from the N-terminus, the 165-residue chain is Pyruvoyl-dependent arginine decarboxylase 1 (165 aa).

A Pyruvic acid (Ser) modification is found at Ser45.

It belongs to the PdaD family. Requires pyruvate as cofactor.

The catalysed reaction is L-arginine + H(+) = agmatine + CO2. The chain is Pyruvoyl-dependent arginine decarboxylase 1 (pdaD1) from Methanosarcina mazei (strain ATCC BAA-159 / DSM 3647 / Goe1 / Go1 / JCM 11833 / OCM 88) (Methanosarcina frisia).